A 692-amino-acid chain; its full sequence is Elongation factor G (692 aa).

A tr-type G domain is found at 8–282 (ERTRNIGIMA…AIVYYLPSPV (275 aa)). Residues 17 to 24 (AHIDAGKT), 81 to 85 (DTPGH), and 135 to 138 (NKMD) contribute to the GTP site.

This sequence belongs to the TRAFAC class translation factor GTPase superfamily. Classic translation factor GTPase family. EF-G/EF-2 subfamily.

The protein resides in the cytoplasm. Functionally, catalyzes the GTP-dependent ribosomal translocation step during translation elongation. During this step, the ribosome changes from the pre-translocational (PRE) to the post-translocational (POST) state as the newly formed A-site-bound peptidyl-tRNA and P-site-bound deacylated tRNA move to the P and E sites, respectively. Catalyzes the coordinated movement of the two tRNA molecules, the mRNA and conformational changes in the ribosome. The polypeptide is Elongation factor G (Carboxydothermus hydrogenoformans (strain ATCC BAA-161 / DSM 6008 / Z-2901)).